Here is a 397-residue protein sequence, read N- to C-terminus: MTTLLNPYFGEFGGMYVPQILMPALRQLEEAFVSAQKDPEFQAQFNDLLKNYAGRPTALTKCQNITAGTNTTLYLKREDLLHGGAHKTNQVLGQALLAKRMGKTEIIAETGAGQHGVASALASALLGLKCRIYMGAKDVERQSPNVFRMRLMGAEVIPVHSGSATLKDACNEALRDWSGSYETAHYMLGTAAGPHPYPTIVREFQRMIGEETKAQILEREGRLPDAVIACVGGGSNAIGMFADFINETDVGLIGVEPGGHGIETGEHGAPLKHGRVGIYFGMKAPMMQTEDGQIEESYSISAGLDFPSVGPQHAYLNSTGRADYVSITDDEALEAFKTLCLHEGIIPALESSHALAHALKMMRENPEKEQLLVVNLSGRGDKDIFTVHDILKARGEI.

Lys-87 carries the N6-(pyridoxal phosphate)lysine modification.

The protein belongs to the TrpB family. In terms of assembly, tetramer of two alpha and two beta chains. Pyridoxal 5'-phosphate is required as a cofactor.

It catalyses the reaction (1S,2R)-1-C-(indol-3-yl)glycerol 3-phosphate + L-serine = D-glyceraldehyde 3-phosphate + L-tryptophan + H2O. The protein operates within amino-acid biosynthesis; L-tryptophan biosynthesis; L-tryptophan from chorismate: step 5/5. In terms of biological role, the beta subunit is responsible for the synthesis of L-tryptophan from indole and L-serine. The protein is Tryptophan synthase beta chain of Escherichia coli O127:H6 (strain E2348/69 / EPEC).